The primary structure comprises 416 residues: MAEPRDTVVLAYSGGLDTSCILVWLKEQGYTVIAFLANIGQTEDFDAAQKKALALGAKKVYIQDVCREFVEDFIWPAVRANALYEDRYMLGSALARPCIARHLVLIAQEEGARYIAHGATGKGNDQVRFELGCYALCPSIKVIAPWRMPEFYQRFPGRRELMEYAQKHGIPVPVTPKAPWSMDENLMHISYEAGILENPKNRAPLDLYTKTCNPTTSPDVPDELEIEFEKGVPVKVTNTRNGVTHRSALELFVYLNDIASKHGVGRVDIVENRFVGMKSRGIYETPAGTILYHAHLDIEAFTMDREVRKIKQGLSLKFSELVYNGFWYSPECEFLKHCIARSQQAVAGTVHVSVFKGQVYVLGRESPHSLYNEELVSMDVQGDYEPADATGFININALRLKEYHRLQSKVSTKQDE.

Residues 11 to 19 and A37 contribute to the ATP site; that span reads AYSGGLDTS. Residue Y88 participates in L-citrulline binding. A phosphotyrosine mark is found at Y88 and Y114. 116–124 provides a ligand contact to ATP; that stretch reads AHGATGKGN. The L-aspartate site is built by T120, N124, and D125. Residue N124 participates in L-citrulline binding. 5 residues coordinate L-citrulline: R128, S181, S190, E271, and Y283. S181 carries the post-translational modification Phosphoserine.

This sequence belongs to the argininosuccinate synthase family. In terms of assembly, homotetramer.

It is found in the cytoplasm. It localises to the cytosol. The catalysed reaction is L-citrulline + L-aspartate + ATP = 2-(N(omega)-L-arginino)succinate + AMP + diphosphate + H(+). It participates in amino-acid biosynthesis; L-arginine biosynthesis; L-arginine from L-ornithine and carbamoyl phosphate: step 2/3. It functions in the pathway nitrogen metabolism; urea cycle; (N(omega)-L-arginino)succinate from L-aspartate and L-citrulline: step 1/1. One of the enzymes of the urea cycle, the metabolic pathway transforming neurotoxic amonia produced by protein catabolism into inocuous urea in the liver of ureotelic animals. Catalyzes the formation of arginosuccinate from aspartate, citrulline and ATP and together with ASL it is responsible for the biosynthesis of arginine in most body tissues. The chain is Argininosuccinate synthase from Gallus gallus (Chicken).